The primary structure comprises 265 residues: Deoxycytidine kinase 1 (265 aa).

30-38 serves as a coordination point for ATP; it reads GNIAAGKST. Positions 55, 88, and 99 each coordinate substrate. The active-site Proton acceptor is Glu-129. 2 residues coordinate substrate: Arg-130 and Asp-135. Residue 190 to 194 participates in ATP binding; sequence RVYTR. Position 199 (Glu-199) interacts with substrate. 242–244 contacts ATP; it reads EDF.

It belongs to the DCK/DGK family. As to quaternary structure, homodimer.

It localises to the nucleus. It carries out the reaction 2'-deoxycytidine + a ribonucleoside 5'-triphosphate = dCMP + a ribonucleoside 5'-diphosphate + H(+). The catalysed reaction is 2'-deoxyguanosine + ATP = dGMP + ADP + H(+). The enzyme catalyses 2'-deoxyadenosine + ATP = dAMP + ADP + H(+). Functionally, phosphorylates the deoxyribonucleosides deoxyadenosine, deoxycytidine and deoxyguanosine with highest activity against deoxycytidine followed by deadenosine and deoxyguanosine. Shows only very minor activity against deoxyuridine and deoxythymidine. The polypeptide is Deoxycytidine kinase 1 (Xenopus laevis (African clawed frog)).